Reading from the N-terminus, the 488-residue chain is 3-octaprenyl-4-hydroxybenzoate carboxy-lyase (488 aa).

Residue N172 coordinates Mn(2+). Prenylated FMN-binding positions include 175-177, 189-191, and 194-195; these read IYR, RWL, and RG. E238 serves as a coordination point for Mn(2+). D287 acts as the Proton donor in catalysis.

This sequence belongs to the UbiD family. Homohexamer. Prenylated FMN serves as cofactor. Requires Mn(2+) as cofactor.

The protein resides in the cell membrane. The enzyme catalyses a 4-hydroxy-3-(all-trans-polyprenyl)benzoate + H(+) = a 2-(all-trans-polyprenyl)phenol + CO2. The protein operates within cofactor biosynthesis; ubiquinone biosynthesis. Catalyzes the decarboxylation of 3-octaprenyl-4-hydroxy benzoate to 2-octaprenylphenol, an intermediate step in ubiquinone biosynthesis. This chain is 3-octaprenyl-4-hydroxybenzoate carboxy-lyase, found in Pseudomonas syringae pv. tomato (strain ATCC BAA-871 / DC3000).